A 357-amino-acid chain; its full sequence is Cobalt-precorrin-5B C(1)-methyltransferase (357 aa).

The protein belongs to the CbiD family.

The enzyme catalyses Co-precorrin-5B + S-adenosyl-L-methionine = Co-precorrin-6A + S-adenosyl-L-homocysteine. It participates in cofactor biosynthesis; adenosylcobalamin biosynthesis; cob(II)yrinate a,c-diamide from sirohydrochlorin (anaerobic route): step 6/10. In terms of biological role, catalyzes the methylation of C-1 in cobalt-precorrin-5B to form cobalt-precorrin-6A. This chain is Cobalt-precorrin-5B C(1)-methyltransferase, found in Alkaliphilus oremlandii (strain OhILAs) (Clostridium oremlandii (strain OhILAs)).